Reading from the N-terminus, the 644-residue chain is Exoribonuclease 2 (644 aa).

The RNB domain occupies 189–516 (RQDLTALNFV…NHRLLKAVIK (328 aa)). An S1 motif domain is found at 561–643 (NTRFAAEIID…ETRSIIARPA (83 aa)).

It belongs to the RNR ribonuclease family. RNase II subfamily.

The protein resides in the cytoplasm. It catalyses the reaction Exonucleolytic cleavage in the 3'- to 5'-direction to yield nucleoside 5'-phosphates.. Its function is as follows. Involved in mRNA degradation. Hydrolyzes single-stranded polyribonucleotides processively in the 3' to 5' direction. This Salmonella enteritidis PT4 (strain P125109) protein is Exoribonuclease 2.